We begin with the raw amino-acid sequence, 452 residues long: Bifunctional protein GlmU (452 aa).

The segment at 1 to 225 (MDVVILAAGL…ENELIGINTR (225 aa)) is pyrophosphorylase. Residues 6-9 (LAAG), Lys20, Gln71, and 76-77 (GT) each bind UDP-N-acetyl-alpha-D-glucosamine. A Mg(2+)-binding site is contributed by Asp99. UDP-N-acetyl-alpha-D-glucosamine contacts are provided by Gly136, Glu151, Asn166, and Asn223. Asn223 lines the Mg(2+) pocket. The interval 226–246 (AELSLAMRYLRDRIVKGWMEK) is linker. The tract at residues 247 to 452 (GITFYDPALV…LGWAKKKRKQ (206 aa)) is N-acetyltransferase. 2 residues coordinate UDP-N-acetyl-alpha-D-glucosamine: Arg329 and Lys347. The Proton acceptor role is filled by His359. Tyr362 and Asn373 together coordinate UDP-N-acetyl-alpha-D-glucosamine. Acetyl-CoA is bound by residues Ala376, 382 to 383 (NY), Ser401, Ala419, and Arg436.

The protein in the N-terminal section; belongs to the N-acetylglucosamine-1-phosphate uridyltransferase family. This sequence in the C-terminal section; belongs to the transferase hexapeptide repeat family. In terms of assembly, homotrimer. Mg(2+) is required as a cofactor.

It localises to the cytoplasm. The catalysed reaction is alpha-D-glucosamine 1-phosphate + acetyl-CoA = N-acetyl-alpha-D-glucosamine 1-phosphate + CoA + H(+). The enzyme catalyses N-acetyl-alpha-D-glucosamine 1-phosphate + UTP + H(+) = UDP-N-acetyl-alpha-D-glucosamine + diphosphate. It participates in nucleotide-sugar biosynthesis; UDP-N-acetyl-alpha-D-glucosamine biosynthesis; N-acetyl-alpha-D-glucosamine 1-phosphate from alpha-D-glucosamine 6-phosphate (route II): step 2/2. It functions in the pathway nucleotide-sugar biosynthesis; UDP-N-acetyl-alpha-D-glucosamine biosynthesis; UDP-N-acetyl-alpha-D-glucosamine from N-acetyl-alpha-D-glucosamine 1-phosphate: step 1/1. Its pathway is bacterial outer membrane biogenesis; LPS lipid A biosynthesis. Catalyzes the last two sequential reactions in the de novo biosynthetic pathway for UDP-N-acetylglucosamine (UDP-GlcNAc). The C-terminal domain catalyzes the transfer of acetyl group from acetyl coenzyme A to glucosamine-1-phosphate (GlcN-1-P) to produce N-acetylglucosamine-1-phosphate (GlcNAc-1-P), which is converted into UDP-GlcNAc by the transfer of uridine 5-monophosphate (from uridine 5-triphosphate), a reaction catalyzed by the N-terminal domain. The chain is Bifunctional protein GlmU from Thermodesulfovibrio yellowstonii (strain ATCC 51303 / DSM 11347 / YP87).